The sequence spans 509 residues: Phytase A (509 aa).

Positions 1 to 15 (MFLLMVPLFSYLAAA) are cleaved as a signal peptide. Cysteines 27 and 36 form a disulfide. Residues glutamine 46, tyrosine 47, arginine 75, histidine 76, arginine 79, threonine 82, and arginine 164 each coordinate 1D-myo-inositol hexakisphosphate. 4 disulfides stabilise this stretch: cysteine 65-cysteine 444, cysteine 216-cysteine 507, cysteine 266-cysteine 295, and cysteine 478-cysteine 486. Residue histidine 76 is the Nucleophile of the active site. Residues asparagine 171 and asparagine 208 are each glycosylated (N-linked (GlcNAc...) asparagine). Lysine 314 lines the 1D-myo-inositol hexakisphosphate pocket. 3 N-linked (GlcNAc...) asparagine glycosylation sites follow: asparagine 348, asparagine 352, and asparagine 367. 2 residues coordinate 1D-myo-inositol hexakisphosphate: histidine 376 and aspartate 377. The N-linked (GlcNAc...) asparagine glycan is linked to asparagine 401.

This sequence belongs to the histidine acid phosphatase family. In terms of assembly, monomer.

It localises to the secreted. It catalyses the reaction 1D-myo-inositol hexakisphosphate + H2O = 1D-myo-inositol 1,2,4,5,6-pentakisphosphate + phosphate. It carries out the reaction 1D-myo-inositol 1,2,4,5,6-pentakisphosphate + H2O = 1D-myo-inositol 1,2,5,6-tetrakisphosphate + phosphate. The catalysed reaction is 1D-myo-inositol 1,2,5,6-tetrakisphosphate + H2O = 1D-myo-inositol 1,2,6-trisphosphate + phosphate. The enzyme catalyses 1D-myo-inositol 1,2,6-trisphosphate + H2O = 1D-myo-inositol 1,2-bisphosphate + phosphate. It catalyses the reaction 1D-myo-inositol 1,2-bisphosphate + H2O = 1D-myo-inositol 2-phosphate + phosphate. Catalyzes the phosphate monoester hydrolysis of phytic acid (myo-inositol hexakisphosphate), which results in the stepwise formation of myo-inositol pentakis-, tetrakis-, tris-, bis-, and monophosphates, as well as the liberation of inorganic phosphate. Myo-inositol 2-monophosphate is the end product. Is also able to dephosphorylate the classic acid phosphatase substrate p-nitrophenyl phosphate. This is Phytase A (pht-1) from Neurospora crassa (strain ATCC 24698 / 74-OR23-1A / CBS 708.71 / DSM 1257 / FGSC 987).